The primary structure comprises 327 residues: o-succinylbenzoate synthase (327 aa).

Lys110 functions as the Proton donor in the catalytic mechanism. Mg(2+) contacts are provided by Asp138, Glu165, and Asp188. The active-site Proton acceptor is Lys212.

It belongs to the mandelate racemase/muconate lactonizing enzyme family. MenC type 1 subfamily. The cofactor is a divalent metal cation.

It catalyses the reaction (1R,6R)-6-hydroxy-2-succinyl-cyclohexa-2,4-diene-1-carboxylate = 2-succinylbenzoate + H2O. It functions in the pathway quinol/quinone metabolism; 1,4-dihydroxy-2-naphthoate biosynthesis; 1,4-dihydroxy-2-naphthoate from chorismate: step 4/7. Its pathway is quinol/quinone metabolism; menaquinone biosynthesis. Converts 2-succinyl-6-hydroxy-2,4-cyclohexadiene-1-carboxylate (SHCHC) to 2-succinylbenzoate (OSB). The sequence is that of o-succinylbenzoate synthase from Mycobacterium ulcerans (strain Agy99).